The sequence spans 820 residues: DNA mismatch repair protein MutS (820 aa).

ATP is bound at residue 618–625; the sequence is GPNMAGKS.

Belongs to the DNA mismatch repair MutS family.

Functionally, this protein is involved in the repair of mismatches in DNA. It is possible that it carries out the mismatch recognition step. This protein has a weak ATPase activity. The sequence is that of DNA mismatch repair protein MutS from Chlamydia trachomatis serovar L2b (strain UCH-1/proctitis).